The sequence spans 293 residues: Inhibitory synaptic factor 1 (293 aa).

The segment at 1–26 (MNIRGAPDLGQPSDDPSSGGERERIR) is disordered. Residues 30-63 (KMVIGQLEGILRELKEVAKELREVVSQIDKLTSD) are a coiled coil. Disordered regions lie at residues 120–186 (TPSD…RERV) and 200–293 (DDEE…RGKN). Positions 171–180 (VKSQLPQRTP) are enriched in polar residues. Over residues 200–215 (DDEEGDGEQEVEEEEV) the composition is skewed to acidic residues. 2 stretches are compositionally biased toward polar residues: residues 243-256 (SPLT…TLAP) and 264-286 (RNSS…TATR).

It belongs to the INSYN1 family. As to quaternary structure, interacts with GPHN.

It is found in the postsynaptic density. Its function is as follows. Component of the protein machinery at the inhibitory synapses, probably acting as a scaffold. Inhibitory synapses dampen neuronal activity through postsynaptic hyperpolarization. This synaptic inhibition is fundamental for the functioning of the central nervous system, shaping and orchestrating the flow of information through neuronal networks to generate a precise neural code. This Homo sapiens (Human) protein is Inhibitory synaptic factor 1.